The following is a 427-amino-acid chain: Tol-Pal system protein TolB (427 aa).

An N-terminal signal peptide occupies residues 1–23 (MKLLKRLVSVFAIVLAVGSNAFA).

Belongs to the TolB family. As to quaternary structure, the Tol-Pal system is composed of five core proteins: the inner membrane proteins TolA, TolQ and TolR, the periplasmic protein TolB and the outer membrane protein Pal. They form a network linking the inner and outer membranes and the peptidoglycan layer.

The protein resides in the periplasm. In terms of biological role, part of the Tol-Pal system, which plays a role in outer membrane invagination during cell division and is important for maintaining outer membrane integrity. In Haemophilus influenzae (strain 86-028NP), this protein is Tol-Pal system protein TolB.